A 228-amino-acid polypeptide reads, in one-letter code: uncharacterized protein (228 aa).

Residues 77 to 79 (TTA), glycine 113, valine 133, and 140 to 142 (PSL) each bind S-adenosyl-L-methionine.

Belongs to the class IV-like SAM-binding methyltransferase superfamily. RNA methyltransferase TrmH family.

This is an uncharacterized protein from Escherichia coli (strain K12).